A 130-amino-acid chain; its full sequence is Large ribosomal subunit protein bL17 (130 aa).

The protein belongs to the bacterial ribosomal protein bL17 family. Part of the 50S ribosomal subunit. Contacts protein L32.

The sequence is that of Large ribosomal subunit protein bL17 from Nitrosomonas europaea (strain ATCC 19718 / CIP 103999 / KCTC 2705 / NBRC 14298).